We begin with the raw amino-acid sequence, 232 residues long: Thiamine import ATP-binding protein ThiQ (232 aa).

The ABC transporter domain maps to 2-230 (LKLTDITWLY…KASASAILGI (229 aa)). Position 32 to 39 (32 to 39 (GPSGAGKS)) interacts with ATP.

Belongs to the ABC transporter superfamily. Thiamine importer (TC 3.A.1.19.1) family. In terms of assembly, the complex is composed of two ATP-binding proteins (ThiQ), two transmembrane proteins (ThiP) and a solute-binding protein (ThiB).

The protein localises to the cell inner membrane. It catalyses the reaction thiamine(out) + ATP + H2O = thiamine(in) + ADP + phosphate + H(+). Its function is as follows. Part of the ABC transporter complex ThiBPQ involved in thiamine import. Responsible for energy coupling to the transport system. In Shigella boydii serotype 4 (strain Sb227), this protein is Thiamine import ATP-binding protein ThiQ.